The chain runs to 419 residues: MRLTPSLISCLSLLHFTSALVAFPGAEGFGANAVGGRQGEVYVVSNLNDSGEGSLRDAVSQPGRIVVFSVGGVIEITDRIVVSKQVTILGQTAPGDGITVYGNGWSFSNADDAIVRYIRIRMGKGGSSGKDAMGIADGKNMIFDHVSVSWGRDETFSINGDVSNVTIQNSIIAQGLETHSCGGLMQTDGGVSLFRNLYIDNKTRNPKVKGVNEFTNNVIYNWGGGGGYIAGGSDGESNVNVIGNYFISGPDTSVTAFTRGNENFHAYVETNYYDSDKDGTLNGSELGVDSTNYGGMDLVTEKYDYPAVASVLSPDDALTYVTKYAGASKVRDSVDTQLVAQVESYGKDGALISDEADMGGAGDLDQGTTPTDTDGDGIPDDAEAELGTDPNTADSMDLDTSGYTFLEVWANSLVPSSYA.

A signal peptide spans M1 to A19. 3 N-linked (GlcNAc...) asparagine glycosylation sites follow: N48, N164, and N201. R204 is an active-site residue. Residues N261–M296 form the EF-hand domain. Ca(2+)-binding residues include D274, D276, D278, and T280. N282 is a glycosylation site (N-linked (GlcNAc...) asparagine). E285 serves as a coordination point for Ca(2+). Residues A350–S395 form a disordered region. The span at D363 to D372 shows a compositional bias: low complexity. Residues T373–L386 are compositionally biased toward acidic residues.

It belongs to the polysaccharide lyase 1 family. Ca(2+) is required as a cofactor.

It localises to the secreted. The catalysed reaction is Eliminative cleavage of (1-&gt;4)-alpha-D-galacturonan to give oligosaccharides with 4-deoxy-alpha-D-galact-4-enuronosyl groups at their non-reducing ends.. In terms of biological role, pectinolytic enzyme consist of four classes of enzymes: pectin lyase, polygalacturonase, pectin methylesterase and rhamnogalacturonase. Among pectinolytic enzymes, pectin lyase is the most important in depolymerization of pectin, since it cleaves internal glycosidic bonds of highly methylated pectins. Favors pectate, the anion, over pectin, the methyl ester. This is Probable pectate lyase C (plyC) from Aspergillus flavus (strain ATCC 200026 / FGSC A1120 / IAM 13836 / NRRL 3357 / JCM 12722 / SRRC 167).